The chain runs to 246 residues: uncharacterized protein (246 aa).

This is an uncharacterized protein from Thermotoga maritima (strain ATCC 43589 / DSM 3109 / JCM 10099 / NBRC 100826 / MSB8).